The sequence spans 306 residues: MAKSSALPDHLYEQMEVGQRLRNQGYRGRFAPSPTGPLHLGNLCTALVSWLQARLANGAWLLRVDDLDQPRNRVGAVESLQQDLHWLGLEWDGPVVFQSRRRGIYNSFLSALRRQGKLYACRCSRRMLADISAPAGRHLVYPGTCRDLELFWGWHEGRLPSWRLRVSKEFSHTSGDVILRRADGFIAYHLATVVDELTLGISEVVRGEDLLDAMNAQLALINAISERPVIYRHVPLLCDDQGRKLAKREGHAGLDSLRSEGLGPSHVVGWLAASQSLVPFGAELTAGELLSELKKKEGVLKSVLKP.

L-glutamate is bound by residues 29-33 (RFAPS) and Asp-65. The short motif at 32-42 (PSPTGPLHLGN) is the 'HIGH' region element. Cys-121, Cys-123, Tyr-141, and Cys-145 together coordinate Zn(2+). Tyr-188 and Arg-206 together coordinate L-glutamate. A 'KMSKS' region motif is present at residues 244 to 248 (KLAKR). Lys-247 is a binding site for ATP.

This sequence belongs to the class-I aminoacyl-tRNA synthetase family. GluQ subfamily. It depends on Zn(2+) as a cofactor.

Functionally, catalyzes the tRNA-independent activation of glutamate in presence of ATP and the subsequent transfer of glutamate onto a tRNA(Asp). Glutamate is transferred on the 2-amino-5-(4,5-dihydroxy-2-cyclopenten-1-yl) moiety of the queuosine in the wobble position of the QUC anticodon. This is Glutamyl-Q tRNA(Asp) synthetase from Prochlorococcus marinus (strain MIT 9313).